The following is a 267-amino-acid chain: Tryptophan synthase alpha chain (267 aa).

Catalysis depends on proton acceptor residues Glu-49 and Asp-60.

This sequence belongs to the TrpA family. Tetramer of two alpha and two beta chains.

It carries out the reaction (1S,2R)-1-C-(indol-3-yl)glycerol 3-phosphate + L-serine = D-glyceraldehyde 3-phosphate + L-tryptophan + H2O. The protein operates within amino-acid biosynthesis; L-tryptophan biosynthesis; L-tryptophan from chorismate: step 5/5. Its function is as follows. The alpha subunit is responsible for the aldol cleavage of indoleglycerol phosphate to indole and glyceraldehyde 3-phosphate. The sequence is that of Tryptophan synthase alpha chain from Salinispora arenicola (strain CNS-205).